The primary structure comprises 103 residues: Integration host factor subunit alpha (103 aa).

Belongs to the bacterial histone-like protein family. As to quaternary structure, heterodimer of an alpha and a beta chain.

In terms of biological role, this protein is one of the two subunits of integration host factor, a specific DNA-binding protein that functions in genetic recombination as well as in transcriptional and translational control. This Aromatoleum aromaticum (strain DSM 19018 / LMG 30748 / EbN1) (Azoarcus sp. (strain EbN1)) protein is Integration host factor subunit alpha.